We begin with the raw amino-acid sequence, 858 residues long: Neural cell adhesion molecule 1 (858 aa).

Residues 1–19 form the signal peptide; the sequence is MLQTKDLIWTLFFLGTAVS. Ig-like C2-type domains are found at residues 20–111, 116–205, 212–301, 308–413, and 416–501; these read LQVD…ATVN, QKLM…KDIQ, PTIQ…ATIH, PKIT…LEVQ, and PKLQ…ESLE. Residues 20–718 lie on the Extracellular side of the membrane; that stretch reads LQVDIVPSQG…IPANGSPTSG (699 aa). 2 cysteine pairs are disulfide-bonded: cysteine 41–cysteine 96 and cysteine 139–cysteine 189. An N-linked (GlcNAc...) asparagine glycan is attached at asparagine 222. Cysteine 235 and cysteine 287 are joined by a disulfide. N-linked (GlcNAc...) asparagine glycosylation is found at asparagine 315, asparagine 347, asparagine 433, asparagine 459, and asparagine 488. The cysteines at positions 329 and 395 are disulfide-linked. The cysteines at positions 436 and 489 are disulfide-linked. 2 Fibronectin type-III domains span residues 509–608 and 611–706; these read TPSS…TQPV and EPSA…SAQP. Proline 706 carries the GPI-anchor amidated asparagine lipid modification. Residues 719–739 traverse the membrane as a helical segment; the sequence is LSTGAIVGILIVIFVLLLVVV. The Cytoplasmic portion of the chain corresponds to 740-858; sequence DITCYFLNKC…TQTKENESKA (119 aa). Isoleucine 741 carries GPI-anchor amidated asparagine lipidation. The segment at 766 to 858 is disordered; the sequence is GAKGKDMEEG…TQTKENESKA (93 aa). Composition is skewed to basic and acidic residues over residues 768–809 and 817–834; these read KGKD…HTEP and EPEK…ETET. Residues serine 780 and serine 784 each carry the phosphoserine modification.

In terms of assembly, (Microbial infection) Interacts with rabies virus glycoprotein. (Microbial infection) Interacts with Zika virus envelope protein E. As to quaternary structure, interacts with MDK. Found in a complex with SLC39A6, SLC39A10 and with NCAM1; this complex controls NCAM1 phosphorylation and integration into focal adhesion complexes during epithelial-tomesenchymal transition. Interacts with synaptic plasticity regulator PANTS. In terms of processing, polysialylated at Asn-459 and Asn-488 by ST8SIA2 and ST8SIA4. Polysialylation modulates cell interactions by confering both attractive and repulsive properties that are highly regulated by ST8SIA2 and ST8SIA4. Polysialylation is formed on a-2,3-linked sialic acid of core glycans.

It is found in the cell membrane. It localises to the secreted. Functionally, this protein is a cell adhesion molecule involved in neuron-neuron adhesion, neurite fasciculation, outgrowth of neurites, etc. Its function is as follows. (Microbial infection) Acts as a receptor for rabies virus. (Microbial infection) Acts as a receptor for Zika virus. The chain is Neural cell adhesion molecule 1 from Homo sapiens (Human).